Reading from the N-terminus, the 242-residue chain is Phosphoribosylaminoimidazole-succinocarboxamide synthase (242 aa).

The protein belongs to the SAICAR synthetase family.

It catalyses the reaction 5-amino-1-(5-phospho-D-ribosyl)imidazole-4-carboxylate + L-aspartate + ATP = (2S)-2-[5-amino-1-(5-phospho-beta-D-ribosyl)imidazole-4-carboxamido]succinate + ADP + phosphate + 2 H(+). It functions in the pathway purine metabolism; IMP biosynthesis via de novo pathway; 5-amino-1-(5-phospho-D-ribosyl)imidazole-4-carboxamide from 5-amino-1-(5-phospho-D-ribosyl)imidazole-4-carboxylate: step 1/2. The chain is Phosphoribosylaminoimidazole-succinocarboxamide synthase from Pediococcus pentosaceus (strain ATCC 25745 / CCUG 21536 / LMG 10740 / 183-1w).